The following is a 73-amino-acid chain: Putative sulfur carrier protein AF_0556 (73 aa).

Residue Cys-11 is the Cysteine persulfide intermediate of the active site.

This sequence belongs to the sulfur carrier protein TusA family.

The sequence is that of Putative sulfur carrier protein AF_0556 from Archaeoglobus fulgidus (strain ATCC 49558 / DSM 4304 / JCM 9628 / NBRC 100126 / VC-16).